The chain runs to 40 residues: Ferredoxin-2 (40 aa).

The 2Fe-2S ferredoxin-type domain occupies 3–40 (YNIKLITPEGTKEITCSDSEYILDAAEEKGLDLPYSCR). [2Fe-2S] cluster is bound at residue Cys-39.

It belongs to the 2Fe2S plant-type ferredoxin family. The cofactor is [2Fe-2S] cluster.

Its subcellular location is the plastid. The protein resides in the chloroplast. Its function is as follows. Ferredoxins are iron-sulfur proteins that transfer electrons in a wide variety of metabolic reactions. This is Ferredoxin-2 from Pisum sativum (Garden pea).